A 30-amino-acid chain; its full sequence is Gamma-II crystallin (30 aa).

The 30-residue stretch at Gly1 to Ser30 folds into the Beta/gamma crystallin 'Greek key' domain.

It belongs to the beta/gamma-crystallin family. As to quaternary structure, monomer.

Its function is as follows. Crystallins are the dominant structural components of the vertebrate eye lens. This Rhizoprionodon acutus (Milk shark) protein is Gamma-II crystallin.